The sequence spans 353 residues: Outer membrane protein P5 (353 aa).

Positions 1 to 21 (MKKTAIALVVAGLAAASVAQA) are cleaved as a signal peptide. A run of 8 beta stranded transmembrane segments spans residues 27 to 37 (TFYAGVKAGQA), 58 to 69 (SFTYGVFGGYQI), 77 to 85 (LAVELGYDD), 104 to 115 (HGTHLSLKGSYE), 120 to 128 (LDVYGKAGV), 158 to 167 (GLFAVGAEYA), 172 to 179 (LAVRLEYQ), and 205 to 213 (SINAGISYR). An OmpA-like domain is found at 227 to 353 (VVSKTFSLNS…RVEIAVNGTK (127 aa)). Residues C326 and C338 are joined by a disulfide bond.

It belongs to the outer membrane OOP (TC 1.B.6) superfamily. OmpA family. Monomer and homodimer.

It is found in the cell outer membrane. Its function is as follows. With TolR probably plays a role in maintaining the position of the peptidoglycan cell wall in the periplasm. Acts as a porin with low permeability that allows slow penetration of small solutes; an internal gate slows down solute passage. Reconstitution in planar bilayers with lithium dodecyl sulfate-solublized P5 yields narrow pores (58 pS conductance) with a low probability of opening, whereas n-octyl-bD-glucopyranoside-solubilized P5 forms large pores (1.1 nS conductance) with high open probability. The large pore easily converts to the smaller pore at room temperature; at 42 degrees Celsius the smaller pore converts to the larger one. The sequence is that of Outer membrane protein P5 from Haemophilus influenzae (strain ATCC 51907 / DSM 11121 / KW20 / Rd).